A 133-amino-acid chain; its full sequence is Holo-[acyl-carrier-protein] synthase (133 aa).

2 residues coordinate Mg(2+): D8 and E56.

This sequence belongs to the P-Pant transferase superfamily. AcpS family. It depends on Mg(2+) as a cofactor.

Its subcellular location is the cytoplasm. It catalyses the reaction apo-[ACP] + CoA = holo-[ACP] + adenosine 3',5'-bisphosphate + H(+). In terms of biological role, transfers the 4'-phosphopantetheine moiety from coenzyme A to a Ser of acyl-carrier-protein. This Deinococcus radiodurans (strain ATCC 13939 / DSM 20539 / JCM 16871 / CCUG 27074 / LMG 4051 / NBRC 15346 / NCIMB 9279 / VKM B-1422 / R1) protein is Holo-[acyl-carrier-protein] synthase.